The following is a 586-amino-acid chain: Phosphomethylpyrimidine synthase (586 aa).

A disordered region spans residues 1–58; the sequence is MKQSVSAEQIELKSSLPGSKKVYVDGPREGMKVPMREIEQSDTNGVPNPPIRVYDTSG. Basic and acidic residues predominate over residues 22 to 39; the sequence is VYVDGPREGMKVPMREIE. Residues N193, M222, Y251, H287, 307–309, 348–351, and E387 contribute to the substrate site; these read SRG and DGLR. A Zn(2+)-binding site is contributed by H391. Residue Y414 participates in substrate binding. Zn(2+) is bound at residue H455. Positions 535, 538, and 543 each coordinate [4Fe-4S] cluster.

Belongs to the ThiC family. It depends on [4Fe-4S] cluster as a cofactor.

It carries out the reaction 5-amino-1-(5-phospho-beta-D-ribosyl)imidazole + S-adenosyl-L-methionine = 4-amino-2-methyl-5-(phosphooxymethyl)pyrimidine + CO + 5'-deoxyadenosine + formate + L-methionine + 3 H(+). The protein operates within cofactor biosynthesis; thiamine diphosphate biosynthesis. In terms of biological role, catalyzes the synthesis of the hydroxymethylpyrimidine phosphate (HMP-P) moiety of thiamine from aminoimidazole ribotide (AIR) in a radical S-adenosyl-L-methionine (SAM)-dependent reaction. This chain is Phosphomethylpyrimidine synthase, found in Bacillus anthracis (strain A0248).